A 545-amino-acid chain; its full sequence is MDLNEITSSSRPLANYHPNVWGDRFLLHEPEFTCQAGEKQLVEELKEEVRRELKEASNDYLRQLKMVDAIQRLGIEYLFEEEIDEALRNLLAKFENYCKDNHDMYATALSFRLLRQHGYKVSCEVFDKFKDGEDGFKVEEVMAVLELFEATHMRIHGEDVLDQAFVFTRNYLQSIHATLSNPIAKQVHNALNGYSCRRGMPRIEARKYIPIYEEYGCHHKALLKLAKLDFNLLQSMHKRELTQLYRWWKDLEMPTKLPYIRDRLVETYFWDMGFYFEPQYALARNILVKVQCLVSIFDDTFDAYGAFKELQLFKDAIDRWSISCLDELPEYMQIIYKLVLDVFEEIESHMIKQGTSYRLDYAREAIKIVIGGYFDEAKWREEEYKPRMEEYMKVATKSAAYLTLIIVSFVGMKNDIATPQAFQWVLSEPQIITASLALARLSNDLVGIEFEKERKYIATAVELYEEEHKVSKEEAVLELRHETESAWKEINEALLEPTTFATPILDRILNSARVLEVFYDKTDRYTHVDLELQNIIAQLYIHPIP.

The Mg(2+) site is built by Asp298, Asp302, Asn443, and Glu451. Positions Asp298 to Asp302 match the DDXXD motif motif.

It belongs to the terpene synthase family. It depends on Mg(2+) as a cofactor.

Its subcellular location is the cytoplasm. The protein resides in the cytosol. It carries out the reaction (2E,6E)-farnesyl diphosphate = (-)-germacrene D + diphosphate. It functions in the pathway secondary metabolite biosynthesis; terpenoid biosynthesis. Functionally, sesquiterpene synthase involved in germacrene D biosynthesis. Also produces at least 13 additional sesquiterpene products, including germacrene C and (+)-germacrene A, beta-ylangene, (E)-beta-farnesene and (E,E)-alpha-farnesene. This Pogostemon cablin (Patchouli) protein is Germacrene D synthase 1.